The primary structure comprises 151 residues: Ribosome maturation factor RimP (151 aa).

The protein belongs to the RimP family.

It is found in the cytoplasm. Functionally, required for maturation of 30S ribosomal subunits. In Halorhodospira halophila (strain DSM 244 / SL1) (Ectothiorhodospira halophila (strain DSM 244 / SL1)), this protein is Ribosome maturation factor RimP.